The chain runs to 286 residues: NAD(P)H azoreductase (286 aa).

Residues 6–11 (GGTGTI), Arg31, and 136–141 (GFFMQN) contribute to the NADP(+) site.

Belongs to the NmrA-type oxidoreductase family. Azoreductase type 3 subfamily. As to quaternary structure, monomer.

Functionally, catalyzes the reductive cleavage of azo bond in aromatic azo compounds to the corresponding amines. Uses preferentially NADPH rather than NADH as an electron donor for its activity. The enzyme reductively cleaved Orange II and carboxy-Orange II, and can also reduce several sulfonated structural analogs, which carry a hydroxy group in the 2 position of the naphthol ring. The polypeptide is NAD(P)H azoreductase (azoB) (Xenophilus azovorans).